We begin with the raw amino-acid sequence, 306 residues long: MNDLRQLRHFVALAEHGHFARAAEAVNLSQPALSRSIQALENGLGCRLLDRGPRQVSLTAHGRLVLEHARRLLDGDRALRSAVSQLDNLGSGELRLGAGPYPGARLVPRALGRFAGAHPGVRVQLAIDTWYSLHQRLLDDALELFVADVRELRDDPQLEVTPLRSWPGVIFCRPGHPLLGRRRHRLTAADLAAYPLAGTQVPAEVAQALGQLAESGQPLGIECDNFMALKALVAESDVLSMAPLDVVAEEIEAGRLALLELAPGLLSQRSAYGLVSRAGRTLSPAAEAMRGLILDEDARTPPASAR.

Residues 1 to 59 (MNDLRQLRHFVALAEHGHFARAAEAVNLSQPALSRSIQALENGLGCRLLDRGPRQVSLT) enclose the HTH lysR-type domain. Residues 19–38 (FARAAEAVNLSQPALSRSIQ) constitute a DNA-binding region (H-T-H motif).

Belongs to the LysR transcriptional regulatory family.

Functionally, activates the transcription of the sdsA gene for sodium dodecyl sulfate (SDS) degradation. The sequence is that of SDS degradation transcriptional activation protein (sdsB) from Pseudomonas sp. (strain ATCC 19151).